A 115-amino-acid chain; its full sequence is NADH-ubiquinone oxidoreductase chain 3 (115 aa).

3 helical membrane-spanning segments follow: residues 3 to 23 (IMLTLLTNVTLASLLVLIAFW), 55 to 75 (FFLVAITFLLFDLEIALLLPL), and 86 to 106 (TMLTMALFLLILLAASLAYEW).

Belongs to the complex I subunit 3 family. Core subunit of respiratory chain NADH dehydrogenase (Complex I) which is composed of 45 different subunits. Interacts with TMEM186. Interacts with TMEM242.

It localises to the mitochondrion inner membrane. The enzyme catalyses a ubiquinone + NADH + 5 H(+)(in) = a ubiquinol + NAD(+) + 4 H(+)(out). Functionally, core subunit of the mitochondrial membrane respiratory chain NADH dehydrogenase (Complex I) which catalyzes electron transfer from NADH through the respiratory chain, using ubiquinone as an electron acceptor. Essential for the catalytic activity of complex I. The chain is NADH-ubiquinone oxidoreductase chain 3 from Sus scrofa (Pig).